Reading from the N-terminus, the 274-residue chain is 2,3,4,5-tetrahydropyridine-2,6-dicarboxylate N-succinyltransferase (274 aa).

2 residues coordinate substrate: Arg-107 and Asp-144.

Belongs to the transferase hexapeptide repeat family. Homotrimer.

It localises to the cytoplasm. The catalysed reaction is (S)-2,3,4,5-tetrahydrodipicolinate + succinyl-CoA + H2O = (S)-2-succinylamino-6-oxoheptanedioate + CoA. It participates in amino-acid biosynthesis; L-lysine biosynthesis via DAP pathway; LL-2,6-diaminopimelate from (S)-tetrahydrodipicolinate (succinylase route): step 1/3. This is 2,3,4,5-tetrahydropyridine-2,6-dicarboxylate N-succinyltransferase from Cereibacter sphaeroides (strain ATCC 17029 / ATH 2.4.9) (Rhodobacter sphaeroides).